Consider the following 85-residue polypeptide: UPF0473 protein CLK_1946 (85 aa).

The protein belongs to the UPF0473 family.

In Clostridium botulinum (strain Loch Maree / Type A3), this protein is UPF0473 protein CLK_1946.